Consider the following 189-residue polypeptide: Myb-like protein T (189 aa).

The region spanning 121-172 (NWSPDEQKALMVEVSTLGNKSEINWFFISQQLFLKGISRNARECQRKHESIQ) is the Myb-like domain.

This is Myb-like protein T (mybT) from Dictyostelium discoideum (Social amoeba).